A 76-amino-acid polypeptide reads, in one-letter code: Protein TraJ (76 aa).

It localises to the cytoplasm. Its function is as follows. This protein is essential for positively regulating the expression of transfer genes that are involved in the conjugal transfer of DNA between bacterial cells. This Escherichia coli protein is Protein TraJ (traJ).